We begin with the raw amino-acid sequence, 545 residues long: CTP synthase (545 aa).

Residues methionine 1–leucine 266 form an amidoligase domain region. Serine 14 serves as a coordination point for CTP. Serine 14 lines the UTP pocket. ATP-binding positions include serine 15–isoleucine 20 and aspartate 72. Mg(2+)-binding residues include aspartate 72 and glutamate 140. Residues aspartate 147 to glutamate 149, lysine 187 to glutamine 192, and lysine 223 contribute to the CTP site. Residues lysine 187–glutamine 192 and lysine 223 contribute to the UTP site. Arginine 239–valine 241 is a binding site for ATP. The region spanning isoleucine 291 to glycine 542 is the Glutamine amidotransferase type-1 domain. L-glutamine is bound at residue glycine 352. Catalysis depends on cysteine 379, which acts as the Nucleophile; for glutamine hydrolysis. Residues leucine 380–glutamine 383, glutamate 403, and arginine 470 each bind L-glutamine. Active-site residues include histidine 515 and glutamate 517.

It belongs to the CTP synthase family. As to quaternary structure, homotetramer.

It catalyses the reaction UTP + L-glutamine + ATP + H2O = CTP + L-glutamate + ADP + phosphate + 2 H(+). It carries out the reaction L-glutamine + H2O = L-glutamate + NH4(+). The enzyme catalyses UTP + NH4(+) + ATP = CTP + ADP + phosphate + 2 H(+). It functions in the pathway pyrimidine metabolism; CTP biosynthesis via de novo pathway; CTP from UDP: step 2/2. Its activity is regulated as follows. Allosterically activated by GTP, when glutamine is the substrate; GTP has no effect on the reaction when ammonia is the substrate. The allosteric effector GTP functions by stabilizing the protein conformation that binds the tetrahedral intermediate(s) formed during glutamine hydrolysis. Inhibited by the product CTP, via allosteric rather than competitive inhibition. Catalyzes the ATP-dependent amination of UTP to CTP with either L-glutamine or ammonia as the source of nitrogen. Regulates intracellular CTP levels through interactions with the four ribonucleotide triphosphates. This Psychromonas ingrahamii (strain DSM 17664 / CCUG 51855 / 37) protein is CTP synthase.